The primary structure comprises 592 residues: Aspartate--tRNA(Asp/Asn) ligase (592 aa).

Residue Glu175 coordinates L-aspartate. An aspartate region spans residues 199-202 (QQFK). The L-aspartate site is built by Arg221 and His451. An ATP-binding site is contributed by 221–223 (RDE). Glu485 contributes to the ATP binding site. L-aspartate is bound at residue Arg492. 537–540 (GIDR) serves as a coordination point for ATP.

The protein belongs to the class-II aminoacyl-tRNA synthetase family. Type 1 subfamily. As to quaternary structure, homodimer.

It localises to the cytoplasm. It carries out the reaction tRNA(Asx) + L-aspartate + ATP = L-aspartyl-tRNA(Asx) + AMP + diphosphate. Its function is as follows. Aspartyl-tRNA synthetase with relaxed tRNA specificity since it is able to aspartylate not only its cognate tRNA(Asp) but also tRNA(Asn). Reaction proceeds in two steps: L-aspartate is first activated by ATP to form Asp-AMP and then transferred to the acceptor end of tRNA(Asp/Asn). The polypeptide is Aspartate--tRNA(Asp/Asn) ligase (Phenylobacterium zucineum (strain HLK1)).